We begin with the raw amino-acid sequence, 42 residues long: MDNILDPLKAPFSSEAAAKTTAAKIAVVYALVGLVGGLLLTK.

Residues Thr-20–Leu-40 traverse the membrane as a helical segment.

Its subcellular location is the virion membrane. In terms of biological role, involved in cell lysis. The chain is Envelope protein P10 (P10) from Pseudomonas savastanoi pv. phaseolicola (Pseudomonas syringae pv. phaseolicola).